A 407-amino-acid chain; its full sequence is Naringenin 8-dimethylallyltransferase 2, chloroplastic (407 aa).

A chloroplast-targeting transit peptide spans 1–23 (MGFVLPASFPGASSITTGGSCLR). 8 consecutive transmembrane segments (helical) span residues 117 to 137 (FCRP…SLVA), 145 to 165 (SLAF…IHIF), 206 to 226 (ILGL…TVFI), 248 to 268 (VLTA…GFFL), 285 to 305 (LIFC…FKDI), 328 to 348 (VFWI…LVGA), 352 to 372 (ILWS…VLWY), and 383 to 403 (VVLQ…YCLI).

It belongs to the UbiA prenyltransferase family. Mg(2+) is required as a cofactor. Requires Mn(2+) as cofactor.

The protein resides in the plastid. Its subcellular location is the chloroplast membrane. It carries out the reaction (2S)-naringenin + dimethylallyl diphosphate = sophoraflavanone B + diphosphate. Its function is as follows. Involved in the biosynthesis of sophoraflavanone G (SFG). Can use flavanones (naringenin, liquiritigenin and hesperetin) as substrates, but not flavonols or isoflavones. Shows a strict specificity for dimethylallyl diphosphate. This Sophora flavescens (Shrubby sophora) protein is Naringenin 8-dimethylallyltransferase 2, chloroplastic (N8DT-2).